Reading from the N-terminus, the 308-residue chain is Aspartate carbamoyltransferase catalytic subunit (308 aa).

Residues Arg55 and Thr56 each contribute to the carbamoyl phosphate site. An L-aspartate-binding site is contributed by Lys83. 3 residues coordinate carbamoyl phosphate: Arg105, His133, and Gln136. The L-aspartate site is built by Arg166 and Arg220. Residues Gly261 and Pro262 each coordinate carbamoyl phosphate.

Belongs to the aspartate/ornithine carbamoyltransferase superfamily. ATCase family. As to quaternary structure, heterododecamer (2C3:3R2) of six catalytic PyrB chains organized as two trimers (C3), and six regulatory PyrI chains organized as three dimers (R2).

It carries out the reaction carbamoyl phosphate + L-aspartate = N-carbamoyl-L-aspartate + phosphate + H(+). It participates in pyrimidine metabolism; UMP biosynthesis via de novo pathway; (S)-dihydroorotate from bicarbonate: step 2/3. Catalyzes the condensation of carbamoyl phosphate and aspartate to form carbamoyl aspartate and inorganic phosphate, the committed step in the de novo pyrimidine nucleotide biosynthesis pathway. This Chlorobium phaeobacteroides (strain DSM 266 / SMG 266 / 2430) protein is Aspartate carbamoyltransferase catalytic subunit.